Consider the following 223-residue polypeptide: Probable GTP-binding protein EngB (223 aa).

The EngB-type G domain maps to 49-223; the sequence is MGVEIAFAGR…LRAALAGLTD (175 aa). GTP is bound by residues 57–64, 84–88, 102–105, 169–172, and 203–205; these read GRSNVGKS, GRTKQ, DMPG, TKAD, and TSS. Positions 64 and 86 each coordinate Mg(2+).

It belongs to the TRAFAC class TrmE-Era-EngA-EngB-Septin-like GTPase superfamily. EngB GTPase family. Mg(2+) is required as a cofactor.

Functionally, necessary for normal cell division and for the maintenance of normal septation. The polypeptide is Probable GTP-binding protein EngB (Granulibacter bethesdensis (strain ATCC BAA-1260 / CGDNIH1)).